Consider the following 676-residue polypeptide: UvrABC system protein C (676 aa).

Residues 16–95 form the GIY-YIG domain; that stretch reads VEPGVYRFRD…IKEFDPRFNI (80 aa). Positions 208–243 constitute a UVR domain; sequence DRLVRDLERKMTAAAEDLDFERAARLRDDIGALRRA.

Belongs to the UvrC family. In terms of assembly, interacts with UvrB in an incision complex.

It localises to the cytoplasm. The UvrABC repair system catalyzes the recognition and processing of DNA lesions. UvrC both incises the 5' and 3' sides of the lesion. The N-terminal half is responsible for the 3' incision and the C-terminal half is responsible for the 5' incision. The chain is UvrABC system protein C from Mycobacterium sp. (strain JLS).